The primary structure comprises 351 residues: UDP-3-O-acylglucosamine N-acyltransferase 1 (351 aa).

The active-site Proton acceptor is His-237.

The protein belongs to the transferase hexapeptide repeat family. LpxD subfamily. In terms of assembly, homotrimer.

The enzyme catalyses a UDP-3-O-[(3R)-3-hydroxyacyl]-alpha-D-glucosamine + a (3R)-hydroxyacyl-[ACP] = a UDP-2-N,3-O-bis[(3R)-3-hydroxyacyl]-alpha-D-glucosamine + holo-[ACP] + H(+). It participates in bacterial outer membrane biogenesis; LPS lipid A biosynthesis. Functionally, catalyzes the N-acylation of UDP-3-O-acylglucosamine using 3-hydroxyacyl-ACP as the acyl donor. Is involved in the biosynthesis of lipid A, a phosphorylated glycolipid that anchors the lipopolysaccharide to the outer membrane of the cell. This Legionella pneumophila (strain Paris) protein is UDP-3-O-acylglucosamine N-acyltransferase 1.